The primary structure comprises 1369 residues: MutS protein homolog 5 (1369 aa).

The disordered stretch occupies residues 138–190; that stretch reads IYEDGTTEEGTSEDTVPTWDSSLAYSTDETTAEKEEKEEDEDDDDEGLPAKLN. Acidic residues predominate over residues 173-184; that stretch reads EKEEDEDDDDEG. 639–646 contacts ATP; the sequence is GPNACGKS. 4 disordered regions span residues 880-915, 935-1135, 1153-1182, and 1248-1278; these read SMRN…SVLS, KKKK…RSSN, LKSQ…HSQN, and NFIF…SSIS. Basic and acidic residues predominate over residues 884–894; that stretch reads VSEEIEKERSE. Composition is skewed to polar residues over residues 895–915 and 941–950; these read ASTP…SVLS and TGSSMESSMS. The span at 954-967 shows a compositional bias: acidic residues; it reads FQEEDEGTEGEEDQ. Positions 991–1003 are enriched in polar residues; that stretch reads QSINSRHSFSTRT. The segment covering 1024–1037 has biased composition (low complexity); the sequence is STSTSSPGPSASKS. Positions 1049–1065 are enriched in polar residues; it reads VKESQVLETPKQLSISS. Residues 1073–1084 show a composition bias toward basic and acidic residues; it reads SSEKDVISRVSE. Composition is skewed to polar residues over residues 1111–1124 and 1153–1167; these read KNRS…QSAR and LKSQ…TPRS. Residues 1254–1263 are compositionally biased toward basic and acidic residues; the sequence is PEPRSSEKQR.

The protein belongs to the DNA mismatch repair MutS family. In terms of assembly, heterooligomer of him-14 and msh-5. Interacts with the brc-1-brd-1 heterodimer. As to expression, expressed in the germline.

Its subcellular location is the chromosome. In terms of biological role, crucial component in meiotic recombination, functioning at some point after the initiation step of recombination. Plays a role in promoting the crossover outcome of meiotic recombination events. Required for formation of normal meiotic crossover, and crossover and chiasmata generated by artificially made DNA breaks. Together with him-14 and zhp-3 plays a role in the activation of DNA damage-dependent apoptosis at the DNA damage checkpoint in pachytene cells. This chain is MutS protein homolog 5, found in Caenorhabditis elegans.